We begin with the raw amino-acid sequence, 1580 residues long: Pentafunctional AROM polypeptide (1580 aa).

The tract at residues 1-381 is 3-dehydroquinate synthase; sequence MATPTVIKIL…HEQKASVVSN (381 aa). NAD(+) contacts are provided by residues 44–46, 81–84, 114–116, and D119; these read DTT, EVSK, and GGV. Residue R130 participates in 7-phospho-2-dehydro-3-deoxy-D-arabino-heptonate binding. Residue 139-140 participates in NAD(+) binding; that stretch reads TT. 7-phospho-2-dehydro-3-deoxy-D-arabino-heptonate contacts are provided by D146 and K152. NAD(+) is bound at residue K161. N162 lines the 7-phospho-2-dehydro-3-deoxy-D-arabino-heptonate pocket. Residues 179 to 182 and N190 each bind NAD(+); that span reads FLNT. E194 provides a ligand contact to Zn(2+). K247 serves as a coordination point for 7-phospho-2-dehydro-3-deoxy-D-arabino-heptonate. The active-site Proton acceptor; for 3-dehydroquinate synthase activity is E257. 7-phospho-2-dehydro-3-deoxy-D-arabino-heptonate is bound by residues 261-265 and H268; that span reads RNLLN. H268 lines the Zn(2+) pocket. H272 functions as the Proton acceptor; for 3-dehydroquinate synthase activity in the catalytic mechanism. 7-phospho-2-dehydro-3-deoxy-D-arabino-heptonate-binding residues include H284 and K353. H284 serves as a coordination point for Zn(2+). The interval 394–838 is EPSP synthase; sequence VSPGVPHALE…WDTLAQLFKA (445 aa). C820 functions as the For EPSP synthase activity in the catalytic mechanism. Residues 857–1048 are shikimate kinase; that stretch reads ASLFIIGMRG…KKKPQSFFVS (192 aa). 863 to 870 is a binding site for ATP; sequence GMRGAGKT. Positions 1049 to 1269 are 3-dehydroquinase; it reads LTLPDLRPSV…AAPGQLSAKE (221 aa). The Proton acceptor; for 3-dehydroquinate dehydratase activity role is filled by H1172. K1200 (schiff-base intermediate with substrate; for 3-dehydroquinate dehydratase activity) is an active-site residue. Residues 1282–1580 form a shikimate dehydrogenase region; the sequence is SKKFAIVGKP…AAVMNADADI (299 aa).

It in the N-terminal section; belongs to the sugar phosphate cyclases superfamily. Dehydroquinate synthase family. The protein in the 2nd section; belongs to the EPSP synthase family. In the 3rd section; belongs to the shikimate kinase family. This sequence in the 4th section; belongs to the type-I 3-dehydroquinase family. It in the C-terminal section; belongs to the shikimate dehydrogenase family. Homodimer. Zn(2+) serves as cofactor.

Its subcellular location is the cytoplasm. It catalyses the reaction 7-phospho-2-dehydro-3-deoxy-D-arabino-heptonate = 3-dehydroquinate + phosphate. The catalysed reaction is 3-dehydroquinate = 3-dehydroshikimate + H2O. The enzyme catalyses shikimate + NADP(+) = 3-dehydroshikimate + NADPH + H(+). It carries out the reaction shikimate + ATP = 3-phosphoshikimate + ADP + H(+). It catalyses the reaction 3-phosphoshikimate + phosphoenolpyruvate = 5-O-(1-carboxyvinyl)-3-phosphoshikimate + phosphate. It functions in the pathway metabolic intermediate biosynthesis; chorismate biosynthesis; chorismate from D-erythrose 4-phosphate and phosphoenolpyruvate: step 2/7. The protein operates within metabolic intermediate biosynthesis; chorismate biosynthesis; chorismate from D-erythrose 4-phosphate and phosphoenolpyruvate: step 3/7. Its pathway is metabolic intermediate biosynthesis; chorismate biosynthesis; chorismate from D-erythrose 4-phosphate and phosphoenolpyruvate: step 4/7. It participates in metabolic intermediate biosynthesis; chorismate biosynthesis; chorismate from D-erythrose 4-phosphate and phosphoenolpyruvate: step 5/7. It functions in the pathway metabolic intermediate biosynthesis; chorismate biosynthesis; chorismate from D-erythrose 4-phosphate and phosphoenolpyruvate: step 6/7. Its function is as follows. The AROM polypeptide catalyzes 5 consecutive enzymatic reactions in prechorismate polyaromatic amino acid biosynthesis. The chain is Pentafunctional AROM polypeptide from Uncinocarpus reesii (strain UAMH 1704).